The chain runs to 33 residues: Photosystem II reaction center protein Psb30 (33 aa).

Residues 5 to 25 traverse the membrane as a helical segment; sequence IVAQLTVLALIVVSGPLVIAL.

This sequence belongs to the Psb30/Ycf12 family. As to quaternary structure, PSII is composed of 1 copy each of membrane proteins PsbA, PsbB, PsbC, PsbD, PsbE, PsbF, PsbH, PsbI, PsbJ, PsbK, PsbL, PsbM, PsbT, PsbX, PsbY, PsbZ, Psb30/Ycf12, peripheral proteins of the oxygen-evolving complex and a large number of cofactors. It forms dimeric complexes.

It is found in the plastid. It localises to the chloroplast thylakoid membrane. In terms of biological role, a core subunit of photosystem II (PSII), probably helps stabilize the reaction center. The polypeptide is Photosystem II reaction center protein Psb30 (Angiopteris evecta (Mule's foot fern)).